The primary structure comprises 119 residues: Hemerythrin-like protein (119 aa).

Residues His26, His56, Glu60, His75, His79, His107, and Asp112 each contribute to the Fe cation site.

This sequence belongs to the hemerythrin family.

Functionally, oxygen-binding protein. The oxygen-binding site contains two iron atoms. The chain is Hemerythrin-like protein (nfa1) from Naegleria fowleri (Brain eating amoeba).